A 211-amino-acid polypeptide reads, in one-letter code: MTEQQSPPEQMVTGEGAGERGGNYKITIYELENFQGRRCELSEELPNVVDKALEKVGSIQVESGPWLGFERQAFAGEQFVLEKGDYPRWDSWSNSHNSDSLMSLRPLQIDSPDHKIHLFENAGYTGRKMEIVDDDVPSLWAHGFQDRVASVRALNGTWVGYEYPGYRGRQHVFEKGEYRHWNEWDANQPLMQSVRRVRDQQWHQRGSFENS.

Residues 1-21 (MTEQQSPPEQMVTGEGAGERG) are disordered. The N-terminal arm stretch occupies residues 1–23 (MTEQQSPPEQMVTGEGAGERGGN). Beta/gamma crystallin 'Greek key' domains lie at 24–63 (YKIT…QVES) and 64–108 (GPWL…RPLQ). A connecting peptide region spans residues 109-113 (IDSPD). Beta/gamma crystallin 'Greek key' domains lie at 114–155 (HKIH…RALN) and 156–198 (GTWV…RRVR). The tract at residues 200–211 (QQWHQRGSFENS) is C-terminal arm.

This sequence belongs to the beta/gamma-crystallin family. As to quaternary structure, homo/heterodimer, or complexes of higher-order. The structure of beta-crystallin oligomers seems to be stabilized through interactions between the N-terminal arms.

Functionally, crystallins are the dominant structural components of the vertebrate eye lens. This is Beta-crystallin B3 (CRYBB3) from Gallus gallus (Chicken).